The sequence spans 567 residues: uncharacterized protein (567 aa).

A run of 10 helical transmembrane segments spans residues 65-85, 92-112, 190-210, 220-240, 302-322, 353-373, 412-432, 434-454, 473-493, and 503-523; these read LSLFGIFSISFSVLGMLPSVA, LWYVGYPGLLWAWLIAMFFLI, WQWFLLAVAIQCFNCVLACLP, VATYLNTAFLFIAGITILAYG, AIVMTAVIGGVVGWIMQIIVA, LGILSLTIISAIIMGQSALIA, IISILILFLTFAGTVTLDAVF, VGAVAAFIAFTVPIAIRVFFT, IGLLAVSFVALMIPILCFPSV, and WTCLVYGGPMLFTLVWYAISA.

This sequence belongs to the amino acid-polyamine-organocation (APC) superfamily.

It is found in the membrane. This is an uncharacterized protein from Schizosaccharomyces pombe (strain 972 / ATCC 24843) (Fission yeast).